The primary structure comprises 335 residues: uncharacterized protein (335 aa).

This sequence belongs to the glycosyltransferase group 1 family. Glycosyltransferase 4 subfamily.

This is an uncharacterized protein from Sulfolobus islandicus rod-shaped virus 1 (SIRV-1).